The primary structure comprises 145 residues: Small ribosomal subunit protein eS19 (145 aa).

It belongs to the eukaryotic ribosomal protein eS19 family. Part of the 30S ribosomal subunit.

In terms of biological role, may be involved in maturation of the 30S ribosomal subunit. In Methanothermobacter thermautotrophicus (strain ATCC 29096 / DSM 1053 / JCM 10044 / NBRC 100330 / Delta H) (Methanobacterium thermoautotrophicum), this protein is Small ribosomal subunit protein eS19.